Here is a 257-residue protein sequence, read N- to C-terminus: Gamma-secretase subunit APH-1B (257 aa).

The next 7 helical transmembrane spans lie at 5–25, 32–52, 71–91, 115–135, 158–178, 186–206, and 213–233; these read VFFGCAFIAFGPALALYVFTI, IIFLIAGAFFWLVSLLISSLV, LLIFGAFVSVYIQEMFRFAYY, LLAYVSGLGFGIMSGVFSFVN, YSAFMTLVIILLHVFWGIVFF, WGILLIVLLTHLLVSAQTFIS, and LASAFIILVLMGTWAFLAAGG.

The protein belongs to the APH-1 family. In terms of assembly, probable component of the gamma-secretase complex, a complex composed of a presenilin homodimer (PSEN1 or PSEN2), nicastrin (NCSTN), APH1 (APH1A or APH1B) and PEN2. Such minimal complex is sufficient for secretase activity, although other components may exist. Interacts with PSEN1 and PSEN2. As to expression, weakly or not expressed in leukocytes, lung, placenta, small intestine, liver, kidney, spleen thymus, colon, skeletal muscle, heart and brain.

The protein localises to the membrane. Its function is as follows. Probable subunit of the gamma-secretase complex, an endoprotease complex that catalyzes the intramembrane cleavage of integral proteins such as Notch receptors and APP (amyloid-beta precursor protein). It probably represents a stabilizing cofactor for the presenilin homodimer that promotes the formation of a stable complex. Probably present in a minority of gamma-secretase complexes compared to APH1A. The chain is Gamma-secretase subunit APH-1B (APH1B) from Homo sapiens (Human).